The following is a 120-amino-acid chain: Large ribosomal subunit protein uL18 (120 aa).

In terms of assembly, part of the 50S ribosomal subunit; part of the 5S rRNA/L5/L18/L25 subcomplex. Contacts the 5S and 23S rRNAs.

In terms of biological role, this is one of the proteins that bind and probably mediate the attachment of the 5S RNA into the large ribosomal subunit, where it forms part of the central protuberance. This chain is Large ribosomal subunit protein uL18, found in Rhodopseudomonas palustris (strain ATCC BAA-98 / CGA009).